A 150-amino-acid polypeptide reads, in one-letter code: 3-hydroxyacyl-[acyl-carrier-protein] dehydratase FabZ (150 aa).

H57 is an active-site residue.

Belongs to the thioester dehydratase family. FabZ subfamily.

It localises to the cytoplasm. The enzyme catalyses a (3R)-hydroxyacyl-[ACP] = a (2E)-enoyl-[ACP] + H2O. In terms of biological role, involved in unsaturated fatty acids biosynthesis. Catalyzes the dehydration of short chain beta-hydroxyacyl-ACPs and long chain saturated and unsaturated beta-hydroxyacyl-ACPs. This is 3-hydroxyacyl-[acyl-carrier-protein] dehydratase FabZ from Actinobacillus succinogenes (strain ATCC 55618 / DSM 22257 / CCUG 43843 / 130Z).